The primary structure comprises 318 residues: 5'-3' exonuclease (318 aa).

The 5'-3' exonuclease domain occupies 194-278 (AYAELALLRG…ATDAPVTLST (85 aa)).

Its function is as follows. 5'-3' exonuclease acting preferentially on double-stranded DNA. This Mycobacterium tuberculosis (strain ATCC 25618 / H37Rv) protein is 5'-3' exonuclease.